The primary structure comprises 217 residues: Pyridoxine/pyridoxamine 5'-phosphate oxidase (217 aa).

Substrate contacts are provided by residues 13 to 16 and Lys71; that span reads RREY. Residues 66-71, 81-82, Arg87, Lys88, and Gln110 each bind FMN; these read RIVLLK and YT. The substrate site is built by Tyr128, Arg132, and Ser136. FMN contacts are provided by residues 145–146 and Trp190; that span reads QS. 196–198 is a binding site for substrate; it reads RLH. Arg200 is a binding site for FMN.

Belongs to the pyridoxamine 5'-phosphate oxidase family. As to quaternary structure, homodimer. It depends on FMN as a cofactor.

The catalysed reaction is pyridoxamine 5'-phosphate + O2 + H2O = pyridoxal 5'-phosphate + H2O2 + NH4(+). The enzyme catalyses pyridoxine 5'-phosphate + O2 = pyridoxal 5'-phosphate + H2O2. It functions in the pathway cofactor metabolism; pyridoxal 5'-phosphate salvage; pyridoxal 5'-phosphate from pyridoxamine 5'-phosphate: step 1/1. Its pathway is cofactor metabolism; pyridoxal 5'-phosphate salvage; pyridoxal 5'-phosphate from pyridoxine 5'-phosphate: step 1/1. Catalyzes the oxidation of either pyridoxine 5'-phosphate (PNP) or pyridoxamine 5'-phosphate (PMP) into pyridoxal 5'-phosphate (PLP). The protein is Pyridoxine/pyridoxamine 5'-phosphate oxidase of Yersinia enterocolitica serotype O:8 / biotype 1B (strain NCTC 13174 / 8081).